The following is a 101-amino-acid chain: Pore-forming peptide amoebapore C (101 aa).

The N-terminal stretch at 1–24 (MKLFVLLCVFVLCLASQEKQQDRE) is a signal peptide. The Saposin B-type domain maps to 25–101 (IPVLCPVCTS…KLICGLIHAC (77 aa)). 3 disulfide bridges follow: Cys-29-Cys-101, Cys-32-Cys-95, and Cys-59-Cys-70.

In terms of assembly, monomer. Homodimer. Hexamer; formed during insertion in the membrane.

It localises to the cytoplasmic granule. Functionally, forms pores in the cell membrane of host cells. Has antibacterial activity against M.luteus, no activity against E.coli. Implicated in the cytolytic activity of the parasite. This is Pore-forming peptide amoebapore C from Entamoeba histolytica (strain ATCC 30459 / HM-1:IMSS / ABRM).